The sequence spans 211 residues: Prolactin (211 aa).

The N-terminal stretch at 1-24 (MTHRRTKLFMMAAVVSYVMTSCGA) is a signal peptide. 2 disulfide bridges follow: cysteine 70-cysteine 184 and cysteine 201-cysteine 211.

This sequence belongs to the somatotropin/prolactin family.

Its subcellular location is the secreted. The chain is Prolactin (prl) from Paralichthys olivaceus (Bastard halibut).